Reading from the N-terminus, the 409-residue chain is Glutamyl-tRNA reductase (409 aa).

Substrate-binding positions include Thr46–Arg49, Ser88, Glu93–Glu95, and Gln99. Cys47 serves as the catalytic Nucleophile. Residue Gly164–Ala169 participates in NADP(+) binding.

It belongs to the glutamyl-tRNA reductase family. As to quaternary structure, homodimer.

The catalysed reaction is (S)-4-amino-5-oxopentanoate + tRNA(Glu) + NADP(+) = L-glutamyl-tRNA(Glu) + NADPH + H(+). The protein operates within porphyrin-containing compound metabolism; protoporphyrin-IX biosynthesis; 5-aminolevulinate from L-glutamyl-tRNA(Glu): step 1/2. Functionally, catalyzes the NADPH-dependent reduction of glutamyl-tRNA(Glu) to glutamate 1-semialdehyde (GSA). This Thermoplasma acidophilum (strain ATCC 25905 / DSM 1728 / JCM 9062 / NBRC 15155 / AMRC-C165) protein is Glutamyl-tRNA reductase.